The chain runs to 267 residues: Acryloyl-CoA reductase electron transfer subunit gamma (267 aa).

As to quaternary structure, heterohexadecamer; tetramer of tetramers. Each tetramer is composed of 2 alpha (AcrC), a beta (AcrA) and a gamma (AcrB) subunit.

The protein localises to the cytoplasm. Functionally, part of the ETF-acryloyl-CoA reductase complex involved in the pathway of L-alanine fermentation. The electron transfer flavoprotein (ETF) serves as a specific electron acceptor for acryloyl-CoA reductase. The polypeptide is Acryloyl-CoA reductase electron transfer subunit gamma (acrB) (Anaerotignum propionicum (Clostridium propionicum)).